A 259-amino-acid chain; its full sequence is Haloacid dehalogenase-like hydrolase domain-containing protein 2 (259 aa).

Asp-13 and Ser-15 together coordinate Mg(2+). Substrate-binding positions include 13-15 and 46-47; these read DLS and TN. Residues 49–71 are a coiled coil; that stretch reads TKESKRDLLERLRKLEFDISEEE. Residue Lys-50 is modified to N6-succinyllysine. Residue Lys-179 coordinates substrate. Asp-204 is a binding site for Mg(2+).

This sequence belongs to the HAD-like hydrolase superfamily. The cofactor is Mg(2+).

This Rattus norvegicus (Rat) protein is Haloacid dehalogenase-like hydrolase domain-containing protein 2 (Hdhd2).